Here is a 455-residue protein sequence, read N- to C-terminus: tRNA modification GTPase MnmE (455 aa).

(6S)-5-formyl-5,6,7,8-tetrahydrofolate-binding residues include Arg-24, Glu-81, and Lys-120. The 163-residue stretch at 216 to 378 (GMTVVIAGRP…LREHLKACMG (163 aa)) folds into the TrmE-type G domain. Asn-226 is a binding site for K(+). GTP-binding positions include 226–231 (NAGKSS), 245–251 (TDIAGTT), 270–273 (DTAG), 335–338 (NKAD), and 359–361 (SAR). Mg(2+) is bound at residue Ser-230. Positions 245, 247, and 250 each coordinate K(+). Thr-251 is a Mg(2+) binding site. Residue Lys-455 coordinates (6S)-5-formyl-5,6,7,8-tetrahydrofolate.

The protein belongs to the TRAFAC class TrmE-Era-EngA-EngB-Septin-like GTPase superfamily. TrmE GTPase family. In terms of assembly, homodimer. Heterotetramer of two MnmE and two MnmG subunits. It depends on K(+) as a cofactor.

It is found in the cytoplasm. In terms of biological role, exhibits a very high intrinsic GTPase hydrolysis rate. Involved in the addition of a carboxymethylaminomethyl (cmnm) group at the wobble position (U34) of certain tRNAs, forming tRNA-cmnm(5)s(2)U34. This is tRNA modification GTPase MnmE from Pseudomonas aeruginosa (strain UCBPP-PA14).